The sequence spans 250 residues: Probable transcriptional regulatory protein SYNAS_07390 (250 aa).

Belongs to the TACO1 family.

Its subcellular location is the cytoplasm. This Syntrophus aciditrophicus (strain SB) protein is Probable transcriptional regulatory protein SYNAS_07390.